Consider the following 71-residue polypeptide: Sodium channel neurotoxin MeuNaTxalpha-12 (71 aa).

The signal sequence occupies residues 1–6 (MTGVES). In terms of domain architecture, LCN-type CS-alpha/beta spans 8-70 (RDAYIAQGNN…VPIRIQGKCQ (63 aa)). Intrachain disulfides connect Cys18–Cys69, Cys22–Cys42, Cys28–Cys52, and Cys32–Cys54. Arg71 is a propeptide (removed by a carboxypeptidase).

It belongs to the long (4 C-C) scorpion toxin superfamily. Sodium channel inhibitor family. Alpha subfamily. In terms of tissue distribution, expressed by the venom gland.

The protein localises to the secreted. In terms of biological role, alpha toxins bind voltage-independently at site-3 of sodium channels (Nav) and inhibit the inactivation of the activated channels, thereby blocking neuronal transmission. The polypeptide is Sodium channel neurotoxin MeuNaTxalpha-12 (Mesobuthus eupeus (Lesser Asian scorpion)).